A 921-amino-acid chain; its full sequence is Probable dipeptidyl-aminopeptidase B (921 aa).

Disordered stretches follow at residues 1-33 and 45-66; these read MAGHPEENAQLLSTEQESMSRNSSDSVASTAST and VAANGSEKPTMVTPKFPPRGER. Residues 1 to 109 are Cytoplasmic-facing; it reads MAGHPEENAQ…NKSVDKKLRR (109 aa). A compositionally biased stretch (polar residues) spans 10-22; it reads QLLSTEQESMSRN. Residues 23 to 33 are compositionally biased toward low complexity; sequence SSDSVASTAST. The chain crosses the membrane as a helical; Signal-anchor for type II membrane protein span at residues 110 to 130; the sequence is LIWIIGGVFIGAWVLALFIFL. The Vacuolar portion of the chain corresponds to 131-921; that stretch reads GKQAYKHSSE…VPLEIDAAKV (791 aa). The tract at residues 138 to 157 is disordered; the sequence is SSESPHDPQATSSRGSGKKV. An N-linked (GlcNAc...) asparagine glycan is attached at Asn-362. Ser-768 (charge relay system) is an active-site residue. Asn-822 carries N-linked (GlcNAc...) asparagine glycosylation. Active-site charge relay system residues include Asp-845 and His-878.

This sequence belongs to the peptidase S9B family.

The protein localises to the vacuole membrane. It carries out the reaction Release of an N-terminal dipeptide, Xaa-Yaa-|-Zaa-, from a polypeptide, preferentially when Yaa is Pro, provided Zaa is neither Pro nor hydroxyproline.. In terms of biological role, type IV dipeptidyl-peptidase which removes N-terminal dipeptides sequentially from polypeptides having unsubstituted N-termini provided that the penultimate residue is proline. This chain is Probable dipeptidyl-aminopeptidase B (dapB), found in Botryotinia fuckeliana (strain B05.10) (Noble rot fungus).